Reading from the N-terminus, the 560-residue chain is Choline/ethanolamine transporter FLVCR1 (560 aa).

The segment at 1–43 is disordered; the sequence is MARPDDEVGPAVAPGHPLGKGYLPVPKGAPDGEARLVPQNGPE. The Cytoplasmic portion of the chain corresponds to 1 to 92; that stretch reads MARPDDEVGP…EDVPCPACPP (92 aa). The helical transmembrane segment at 93–117 threads the bilayer; it reads RTALSPRRFVVLLIFSLYSLVNAFQ. Residues 118 to 135 lie on the Extracellular side of the membrane; the sequence is WIQYSSISNVFEDFYEVS. A helical transmembrane segment spans residues 136–163; the sequence is PLHINWLSMVYMVAYVPLIFPATWLLDT. Residues 164–165 lie on the Cytoplasmic side of the membrane; it reads RG. Residues 166 to 185 form a helical membrane-spanning segment; it reads LRLTALLGSGLNCLGAWVKC. Residues 186-192 lie on the Extracellular side of the membrane; it reads GSVQRHL. Residues 193–221 traverse the membrane as a helical segment; it reads FWVTMLGQILCSVAQVFILGLPSPVASVW. Residue Gln207 participates in ethanolamine binding. Residues 222 to 226 are Cytoplasmic-facing; it reads FGPKE. The helical transmembrane segment at 227 to 252 threads the bilayer; sequence VSTACATAVLGNQLGTAVGFLLPPVL. At 253-270 the chain is on the extracellular side; sequence VPALGTQNSTGLLAHTQN. N-linked (GlcNAc...) asparagine glycosylation is present at Asn270. Residues 271–300 traverse the membrane as a helical segment; that stretch reads NTDLLAHNINTMFYGTAFISTFLFFLTIIA. Residues 301–336 lie on the Cytoplasmic side of the membrane; that stretch reads FKEKPPLPPSQAQAVLRDSPPEEYSYKSSIWNLCRN. Residues 337-367 form a helical membrane-spanning segment; that stretch reads IPFVLLLVSYGIMTGAFYSISTLLNQIILTY. The Extracellular segment spans residues 368–371; sequence YVGE. A helical transmembrane segment spans residues 372 to 400; that stretch reads EVNAGRIGLTLVVAGMVGSILCGLWLDYT. The Cytoplasmic portion of the chain corresponds to 401–402; sequence KT. A helical membrane pass occupies residues 403 to 425; that stretch reads YKQTTLIVYVLSFIGMLIFTFTL. Over 426 to 428 the chain is Extracellular; sequence NLG. Residues 429–458 traverse the membrane as a helical segment; the sequence is YIIVVFFTGGILGFFMTGYLPLGFEFAVEI. The Cytoplasmic segment spans residues 459 to 466; the sequence is TYPESEGM. A helical membrane pass occupies residues 467 to 492; it reads SSGLLNTAAQILGIFFTLAQGKITTD. Gln476 provides a ligand contact to ethanolamine. Gln476 contributes to the choline binding site. Residues 493–495 lie on the Extracellular side of the membrane; that stretch reads YNS. Residues 496–518 form a helical membrane-spanning segment; the sequence is PEAGNIFLCAWMFVGIILTALIK. Topologically, residues 519–560 are cytoplasmic; it reads SDLRRHNINTGLTNIDVKAVPVDSRVDPKPKVMVSIQSESSL. Ser542 carries the phosphoserine modification.

The protein belongs to the major facilitator superfamily. Feline leukemia virus subgroup C receptor (TC 2.A.1.28.1) family.

It localises to the cell membrane. It is found in the mitochondrion membrane. It carries out the reaction choline(out) = choline(in). The enzyme catalyses ethanolamine(in) = ethanolamine(out). The catalysed reaction is heme b(in) = heme b(out). Functionally, uniporter that mediates the transport of extracellular choline and ethanolamine into cells, thereby playing a key role in phospholipid biosynthesis. Choline and ethanolamine are the precursors of phosphatidylcholine and phosphatidylethanolamine, respectively, the two most abundant phospholipids. Transport is not coupled with proton transport and is exclusively driven by the choline (or ethanolamine) gradient across the plasma membrane. Also acts as a heme b transporter that mediates heme efflux from the cytoplasm to the extracellular compartment. Its function is as follows. Uniporter that mediates the transport of extracellular choline and ethanolamine into cells. Choline and ethanolamine are the precursors of phosphatidylcholine and phosphatidylethanolamine, respectively, the two most abundant phospholipids. Transport is not coupled with proton transport and is exclusively driven by the choline (or ethanolamine) gradient across the plasma membrane. Also acts as a heme b transporter that mediates heme efflux from the cytoplasm to the extracellular compartment. Heme export depends on the presence of HPX and is required to maintain intracellular free heme balance, protecting cells from heme toxicity. Heme export provides protection from heme or ferrous iron toxicities in liver, brain, sensory neurons and during erythropoiesis, a process in which heme synthesis intensifies. Possibly export coproporphyrin and protoporphyrin IX, which are both intermediate products in the heme biosynthetic pathway. Does not export bilirubin. The molecular mechanism of heme transport, whether electrogenic, electroneutral or coupled to other ions, remains to be elucidated. Heme transporter that promotes heme efflux from the mitochondrion to the cytoplasm. Essential for erythroid differentiation. This Mus musculus (Mouse) protein is Choline/ethanolamine transporter FLVCR1 (Flvcr1).